Here is a 338-residue protein sequence, read N- to C-terminus: Aspartate carbamoyltransferase catalytic subunit (338 aa).

Carbamoyl phosphate is bound by residues arginine 72 and threonine 73. L-aspartate is bound at residue lysine 100. Carbamoyl phosphate is bound by residues arginine 122, histidine 152, and glutamine 155. Residues arginine 186 and arginine 243 each contribute to the L-aspartate site. Carbamoyl phosphate is bound by residues glycine 284 and proline 285.

Belongs to the aspartate/ornithine carbamoyltransferase superfamily. ATCase family. In terms of assembly, heterododecamer (2C3:3R2) of six catalytic PyrB chains organized as two trimers (C3), and six regulatory PyrI chains organized as three dimers (R2).

The catalysed reaction is carbamoyl phosphate + L-aspartate = N-carbamoyl-L-aspartate + phosphate + H(+). Its pathway is pyrimidine metabolism; UMP biosynthesis via de novo pathway; (S)-dihydroorotate from bicarbonate: step 2/3. In terms of biological role, catalyzes the condensation of carbamoyl phosphate and aspartate to form carbamoyl aspartate and inorganic phosphate, the committed step in the de novo pyrimidine nucleotide biosynthesis pathway. This chain is Aspartate carbamoyltransferase catalytic subunit, found in Acinetobacter baumannii (strain SDF).